The chain runs to 565 residues: Perivitellin-2 67 kDa subunit (565 aa).

An N-terminal signal peptide occupies residues M1–G26. The region spanning A27–T340 is the MACPF domain. The invertebrate MACPF Accessory Domain (IMAD) stretch occupies residues V387 to K565.

As to quaternary structure, perivitellin-2 is a dimer of heterodimers held together head-to-tail by non-covalent forces. The heterodimer is composed of the tachylectin subunit (31 kDa) and the MACPF subunit (67 kDa) that are disulfide-linked. PV2 is a very high density lipoprotein (VHDL). It contains 3.75% of lipids. The major lipid classes are free sterols and phospholipids and also have significant quantities of energy-providing triacylglycerides and free fatty acids. In terms of tissue distribution, produced by albumen secretory cells. Found in developing eggs.

It is found in the secreted. The protein resides in the target cell membrane. Functionally, the egg defensive protein perivitellin-2 is a pore-forming two-subunit glycoprotein that affects both the nervous and digestive systems of mammals. In addition, it is a source of both structural and energetic molecules during embryonic development. The tachylectin subunit (31 kDa) binds target membranes while the MACPF subunit (67 kDa) disrupts lipid bilayers forming large pores (inner diameter of about 5.6 nm) altering the plasma membrance conductance. Both in vivo and in vitro, the protein shows wide pH range stability and is resistant to enzymatic proteolysis from gastrointestinal environments. It is cytotoxic to both epithelial and immune cells from the digestive system of mammals. It induces enterocyte death by a lytic mechanism and disrupts enterocyte monolayers in a dose-dependent manner. After oral administration to mice, it binds enterocytes and induces large dose-dependent morphological changes on their small intestine mucosa, reducing the absorptive surface. Additionally, it is detected in the Peyer's patches where it activates lymphoid follicles and triggers apoptosis. The toxin can also traverse the intestinal barrier and induce oral adaptive immunity with evidence of circulating antibody response. The toxin also shows hemagglutination properties thanks to the tachylectin subunit, but has no hemolytic activity. In addition to enterotoxin activity, the toxin also acts as a neurotoxin, since an intraperitoneal injection can induce paralysis of the mice rear limbs, followed by death. The sequence is that of Perivitellin-2 67 kDa subunit from Pomacea maculata (Giant applesnail).